The chain runs to 549 residues: Glucose-6-phosphate isomerase (549 aa).

Glu-355 functions as the Proton donor in the catalytic mechanism. Residues His-386 and Lys-514 contribute to the active site.

The protein belongs to the GPI family.

The protein localises to the cytoplasm. The enzyme catalyses alpha-D-glucose 6-phosphate = beta-D-fructose 6-phosphate. It participates in carbohydrate biosynthesis; gluconeogenesis. The protein operates within carbohydrate degradation; glycolysis; D-glyceraldehyde 3-phosphate and glycerone phosphate from D-glucose: step 2/4. Catalyzes the reversible isomerization of glucose-6-phosphate to fructose-6-phosphate. The polypeptide is Glucose-6-phosphate isomerase (Salmonella typhi).